We begin with the raw amino-acid sequence, 73 residues long: Beta-defensin 50 (73 aa).

Positions 1–23 (MKTLCFLLLTSGLLYLMVKGVGS) are cleaved as a signal peptide. Cystine bridges form between Cys34–Cys63 and Cys46–Cys64.

It belongs to the beta-defensin family. In terms of tissue distribution, highly expressed in prostate. Not expressed in uterus, epididymis, ovary, testis, spleen, submaxillary gland, thymus, thyroid, pancreas, smooth muscle, skeletal muscle, heart, kidney, lung, liver, eye and brain.

It localises to the secreted. Its function is as follows. Has bactericidal activity. The polypeptide is Beta-defensin 50 (Defb50) (Mus musculus (Mouse)).